The sequence spans 165 residues: Adenine phosphoribosyltransferase (165 aa).

The protein belongs to the purine/pyrimidine phosphoribosyltransferase family. In terms of assembly, homodimer.

The protein localises to the cytoplasm. It catalyses the reaction AMP + diphosphate = 5-phospho-alpha-D-ribose 1-diphosphate + adenine. It participates in purine metabolism; AMP biosynthesis via salvage pathway; AMP from adenine: step 1/1. Catalyzes a salvage reaction resulting in the formation of AMP, that is energically less costly than de novo synthesis. This Bdellovibrio bacteriovorus (strain ATCC 15356 / DSM 50701 / NCIMB 9529 / HD100) protein is Adenine phosphoribosyltransferase.